Consider the following 429-residue polypeptide: Hydrogenobyrinate a,c-diamide synthase (429 aa).

Residues 240-429 (RTAVARDVAF…SFMHLIDFSE (190 aa)) form the GATase cobBQ-type domain. Cys323 (nucleophile) is an active-site residue.

Belongs to the CobB/CbiA family. Mg(2+) is required as a cofactor.

It catalyses the reaction hydrogenobyrinate + 2 L-glutamine + 2 ATP + 2 H2O = hydrogenobyrinate a,c-diamide + 2 L-glutamate + 2 ADP + 2 phosphate + 2 H(+). The protein operates within cofactor biosynthesis; adenosylcobalamin biosynthesis; cob(II)yrinate a,c-diamide from precorrin-2 (aerobic route): step 9/10. Its function is as follows. Catalyzes the ATP-dependent amidation of the two carboxylate groups at positions a and c of hydrogenobyrinate, using either L-glutamine or ammonia as the nitrogen source. This chain is Hydrogenobyrinate a,c-diamide synthase, found in Rhizobium meliloti (strain 1021) (Ensifer meliloti).